The chain runs to 371 residues: Chorismate synthase (371 aa).

NADP(+) contacts are provided by arginine 48 and arginine 54. Residues 125–127 (RSS), 238–239 (NA), glycine 278, 293–297 (KPTSS), and arginine 319 each bind FMN.

It belongs to the chorismate synthase family. In terms of assembly, homotetramer. FMNH2 is required as a cofactor.

The enzyme catalyses 5-O-(1-carboxyvinyl)-3-phosphoshikimate = chorismate + phosphate. It functions in the pathway metabolic intermediate biosynthesis; chorismate biosynthesis; chorismate from D-erythrose 4-phosphate and phosphoenolpyruvate: step 7/7. In terms of biological role, catalyzes the anti-1,4-elimination of the C-3 phosphate and the C-6 proR hydrogen from 5-enolpyruvylshikimate-3-phosphate (EPSP) to yield chorismate, which is the branch point compound that serves as the starting substrate for the three terminal pathways of aromatic amino acid biosynthesis. This reaction introduces a second double bond into the aromatic ring system. The protein is Chorismate synthase of Saccharophagus degradans (strain 2-40 / ATCC 43961 / DSM 17024).